Reading from the N-terminus, the 278-residue chain is Adenosylcobinamide-GDP ribazoletransferase (278 aa).

The next 7 helical transmembrane spans lie at A31–F51, T66–L86, T115–L135, I148–P168, D187–F207, A215–L237, and I247–I267.

This sequence belongs to the CobS family. It depends on Mg(2+) as a cofactor.

The protein resides in the cell membrane. The catalysed reaction is alpha-ribazole + adenosylcob(III)inamide-GDP = adenosylcob(III)alamin + GMP + H(+). The enzyme catalyses alpha-ribazole 5'-phosphate + adenosylcob(III)inamide-GDP = adenosylcob(III)alamin 5'-phosphate + GMP + H(+). It functions in the pathway cofactor biosynthesis; adenosylcobalamin biosynthesis; adenosylcobalamin from cob(II)yrinate a,c-diamide: step 7/7. Functionally, joins adenosylcobinamide-GDP and alpha-ribazole to generate adenosylcobalamin (Ado-cobalamin). Also synthesizes adenosylcobalamin 5'-phosphate from adenosylcobinamide-GDP and alpha-ribazole 5'-phosphate. The sequence is that of Adenosylcobinamide-GDP ribazoletransferase from Frankia casuarinae (strain DSM 45818 / CECT 9043 / HFP020203 / CcI3).